Here is a 529-residue protein sequence, read N- to C-terminus: Phosphoenolpyruvate carboxykinase (ATP) (529 aa).

Residues Arg60, Tyr195, and Lys201 each coordinate substrate. ATP-binding positions include Lys201, His220, and 236-244 (GLSGTGKTT). 2 residues coordinate Mn(2+): Lys201 and His220. Residue Asp257 coordinates Mn(2+). 3 residues coordinate ATP: Glu285, Arg323, and Ser448. Arg323 provides a ligand contact to substrate.

This sequence belongs to the phosphoenolpyruvate carboxykinase (ATP) family. It depends on Mn(2+) as a cofactor.

It is found in the cytoplasm. It catalyses the reaction oxaloacetate + ATP = phosphoenolpyruvate + ADP + CO2. Its pathway is carbohydrate biosynthesis; gluconeogenesis. Its function is as follows. Involved in the gluconeogenesis. Catalyzes the conversion of oxaloacetate (OAA) to phosphoenolpyruvate (PEP) through direct phosphoryl transfer between the nucleoside triphosphate and OAA. This Geobacter sp. (strain M21) protein is Phosphoenolpyruvate carboxykinase (ATP).